A 785-amino-acid chain; its full sequence is Cadherin-7 (785 aa).

The signal sequence occupies residues Met1 to Ala27. A propeptide spanning residues Glu28–Arg47 is cleaved from the precursor. At Glu28–Thr607 the chain is on the extracellular side. Cadherin domains lie at Trp49–Phe153, Leu154–Phe262, Pro263–Phe377, Ser378–Phe482, and Phe482–Tyr599. N-linked (GlcNAc...) asparagine glycosylation is found at Asn449 and Asn530. A helical transmembrane segment spans residues Gly608–Val628. Residues Thr629–Ser785 are Cytoplasmic-facing.

It localises to the cell membrane. In terms of biological role, cadherins are calcium-dependent cell adhesion proteins. They preferentially interact with themselves in a homophilic manner in connecting cells; cadherins may thus contribute to the sorting of heterogeneous cell types. This is Cadherin-7 (Cdh7) from Mus musculus (Mouse).